The sequence spans 325 residues: 4-hydroxy-3-methylbut-2-enyl diphosphate reductase (325 aa).

C13 is a [4Fe-4S] cluster binding site. (2E)-4-hydroxy-3-methylbut-2-enyl diphosphate contacts are provided by H42 and H76. Dimethylallyl diphosphate contacts are provided by H42 and H76. Isopentenyl diphosphate contacts are provided by H42 and H76. C98 lines the [4Fe-4S] cluster pocket. (2E)-4-hydroxy-3-methylbut-2-enyl diphosphate is bound at residue H126. Dimethylallyl diphosphate is bound at residue H126. H126 contributes to the isopentenyl diphosphate binding site. E128 (proton donor) is an active-site residue. T169 contributes to the (2E)-4-hydroxy-3-methylbut-2-enyl diphosphate binding site. C230 provides a ligand contact to [4Fe-4S] cluster. The (2E)-4-hydroxy-3-methylbut-2-enyl diphosphate site is built by S258, S259, N260, and S306. Dimethylallyl diphosphate-binding residues include S258, S259, N260, and S306. The isopentenyl diphosphate site is built by S258, S259, N260, and S306.

This sequence belongs to the IspH family. Requires [4Fe-4S] cluster as cofactor.

The enzyme catalyses isopentenyl diphosphate + 2 oxidized [2Fe-2S]-[ferredoxin] + H2O = (2E)-4-hydroxy-3-methylbut-2-enyl diphosphate + 2 reduced [2Fe-2S]-[ferredoxin] + 2 H(+). It catalyses the reaction dimethylallyl diphosphate + 2 oxidized [2Fe-2S]-[ferredoxin] + H2O = (2E)-4-hydroxy-3-methylbut-2-enyl diphosphate + 2 reduced [2Fe-2S]-[ferredoxin] + 2 H(+). The protein operates within isoprenoid biosynthesis; dimethylallyl diphosphate biosynthesis; dimethylallyl diphosphate from (2E)-4-hydroxy-3-methylbutenyl diphosphate: step 1/1. It participates in isoprenoid biosynthesis; isopentenyl diphosphate biosynthesis via DXP pathway; isopentenyl diphosphate from 1-deoxy-D-xylulose 5-phosphate: step 6/6. Catalyzes the conversion of 1-hydroxy-2-methyl-2-(E)-butenyl 4-diphosphate (HMBPP) into a mixture of isopentenyl diphosphate (IPP) and dimethylallyl diphosphate (DMAPP). Acts in the terminal step of the DOXP/MEP pathway for isoprenoid precursor biosynthesis. This is 4-hydroxy-3-methylbut-2-enyl diphosphate reductase from Chlorobium phaeobacteroides (strain BS1).